Here is a 357-residue protein sequence, read N- to C-terminus: Arginine kinase (357 aa).

Residue alanine 2 is modified to N-acetylalanine. The 83-residue stretch at 9–91 folds into the Phosphagen kinase N-terminal domain; it reads KLEEGFKKLE…FDPIIEDYHK (83 aa). 64 to 68 is an L-arginine binding site; the sequence is GVGVY. Positions 119–356 constitute a Phosphagen kinase C-terminal domain; that stretch reads FVISTRVRCG…LELIKIEKEM (238 aa). Residues 122–126 and histidine 185 each bind ATP; that span reads STRVR. L-arginine is bound at residue glutamate 225. Arginine 229 lines the ATP pocket. L-arginine is bound at residue cysteine 271. ATP-binding positions include 280 to 284 and 309 to 314; these read RASVH and RGTRGE. Residue glutamate 314 coordinates L-arginine.

This sequence belongs to the ATP:guanido phosphotransferase family.

It catalyses the reaction L-arginine + ATP = N(omega)-phospho-L-arginine + ADP + H(+). This chain is Arginine kinase, found in Carcinus maenas (Common shore crab).